The sequence spans 337 residues: Protein ABHD13 (337 aa).

Residues 30 to 50 (LLALILTFHLYGGFVLLGLIL) traverse the membrane as a helical; Signal-anchor for type II membrane protein segment. Residues Ser193, Asp268, and His298 each act as charge relay system in the active site. Asn299 carries an N-linked (GlcNAc...) asparagine glycan.

This sequence belongs to the serine esterase family.

It localises to the membrane. The protein is Protein ABHD13 of Danio rerio (Zebrafish).